The primary structure comprises 157 residues: Large ribosomal subunit protein uL11 (157 aa).

It belongs to the universal ribosomal protein uL11 family. Part of the ribosomal stalk of the 50S ribosomal subunit. Interacts with L10 and the large rRNA to form the base of the stalk. L10 forms an elongated spine to which L12 dimers bind in a sequential fashion forming a multimeric L10(L12)X complex.

In terms of biological role, forms part of the ribosomal stalk which helps the ribosome interact with GTP-bound translation factors. This chain is Large ribosomal subunit protein uL11, found in Methanocorpusculum labreanum (strain ATCC 43576 / DSM 4855 / Z).